Consider the following 343-residue polypeptide: MDKFSQSPPLRDDLVRGSSLNWTKEKENILKGPFNYLESHPGKDIRSQLIAAFNAWLDVPEESLNVIRRVVAMLHTASLLIDDVEDNSQLRRGIPVAHNVFGTAQTINSANYVYFCALKELAILNNPAVIQIYTEELVNLHRGQGMDLFWRDTLTCPSEDDYLEMVGNKTGGLFRLAIKLMCAESPSHNAHPDPFQRNDYVPLVNTIGLLFQILDDYKNLSDTIYTQNKGLCEDLTEGKFSFPIIHAIRADPGNLVLINILKQKTTDDEVKKYAVAYMDRAGSFSYTRKVLRGLTKKALTQVDEVDAGRGRGEQMKTILEKLRVDRNHQRGVLTPAAGGASIA.

Residues Lys-43, Arg-46, and His-75 each coordinate isopentenyl diphosphate. Mg(2+) contacts are provided by Asp-82 and Asp-86. Arg-91 serves as a coordination point for dimethylallyl diphosphate. Residue Arg-92 coordinates isopentenyl diphosphate. Residues Lys-169, Thr-170, and Gln-212 each coordinate dimethylallyl diphosphate. Asp-215 contributes to the Mg(2+) binding site. Positions 219, 229, and 239 each coordinate dimethylallyl diphosphate.

This sequence belongs to the FPP/GGPP synthase family. Mg(2+) serves as cofactor.

The enzyme catalyses isopentenyl diphosphate + dimethylallyl diphosphate = (2E)-geranyl diphosphate + diphosphate. It carries out the reaction isopentenyl diphosphate + (2E)-geranyl diphosphate = (2E,6E)-farnesyl diphosphate + diphosphate. The catalysed reaction is isopentenyl diphosphate + (2E,6E)-farnesyl diphosphate = (2E,6E,10E)-geranylgeranyl diphosphate + diphosphate. Functionally, geranylgeranyl pyrophosphate synthase; part of the gene cluster 4 that mediates the biosynthesis of an isoprenoid secondary metabolite. This Zymoseptoria tritici (strain CBS 115943 / IPO323) (Speckled leaf blotch fungus) protein is Geranylgeranyl pyrophosphate synthase 1 (GGS1).